The chain runs to 123 residues: Signal recognition particle 14 kDa protein (123 aa).

The interval lysine 99–valine 123 is disordered. Over residues threonine 103 to threonine 116 the composition is skewed to low complexity.

It belongs to the SRP14 family. As to quaternary structure, heterodimer with srp9; binds RNA as heterodimer. Component of a signal recognition particle (SRP) complex that consists of a 7SL RNA molecule and six protein subunits: srp72, srp68, srp54, srp19, srp14 and srp9.

Its subcellular location is the cytoplasm. Component of the signal recognition particle (SRP) complex, a ribonucleoprotein complex that mediates the cotranslational targeting of secretory and membrane proteins to the endoplasmic reticulum (ER). Srp9 together with srp14 and the Alu portion of the SRP RNA, constitutes the elongation arrest domain of SRP. The complex of srp9 and srp14 is required for SRP RNA binding. The protein is Signal recognition particle 14 kDa protein (srp14-1) of Dictyostelium discoideum (Social amoeba).